Reading from the N-terminus, the 245-residue chain is NAD-dependent protein deacetylase (245 aa).

A Deacetylase sirtuin-type domain is found at 1 to 245 (MIFVQQFEEV…EFVEGLSSRK (245 aa)). NAD(+) is bound by residues Ala26, Thr30, Phe37, Arg38, Gln105, Ile107, Asp108, and His123. Phe37 serves as a coordination point for nicotinamide. Residues Ile107 and Asp108 each contribute to the nicotinamide site. The active-site Proton acceptor is His123. Zn(2+) contacts are provided by Cys131, Cys134, Cys151, and Cys154. Residues Thr190, Ser191, Asn216, and Ile234 each contribute to the NAD(+) site.

This sequence belongs to the sirtuin family. Class U subfamily. Zn(2+) is required as a cofactor.

The protein localises to the cytoplasm. It carries out the reaction N(6)-acetyl-L-lysyl-[protein] + NAD(+) + H2O = 2''-O-acetyl-ADP-D-ribose + nicotinamide + L-lysyl-[protein]. NAD-dependent protein deacetylase which modulates the activities of several enzymes which are inactive in their acetylated form. The chain is NAD-dependent protein deacetylase from Bacillus cereus (strain ZK / E33L).